The following is a 155-amino-acid chain: WPP domain-containing protein 1 (155 aa).

Disordered regions lie at residues 1 to 41 and 124 to 155; these read MAET…VTIS and SVKA…SSEA. The span at 7–39 shows a compositional bias: low complexity; that stretch reads ESITTSSPPPISETENSTTLPTTETEKNPNPVT. The segment at 28–131 is WPP; the sequence is TTETEKNPNP…LESVKAKSNV (104 aa). The span at 146–155 shows a compositional bias: basic and acidic residues; the sequence is VDSKIDSSEA.

As to quaternary structure, binds to FPP proteins. Interacts with WAP, WIP1, WIP2 and WIP3 through its WPP domain. Interacts with HSP70-1, HSP70-3 and WIT1. Component of a ternary complex composed of WPP1, HSP70-1 and WIT1. Expressed in roots, stems and leaves.

It is found in the nucleus envelope. It localises to the cytoplasm. The protein localises to the nucleus. Its subcellular location is the golgi apparatus. The protein resides in the nucleus matrix. Functionally, regulates the mitotic activity in roots. Plays a role with HSP70-1 in facilitating WIT1 nuclear envelope targeting. This chain is WPP domain-containing protein 1 (WPP1), found in Arabidopsis thaliana (Mouse-ear cress).